The sequence spans 265 residues: Keratinocyte-associated transmembrane protein 2 (265 aa).

An N-terminal signal peptide occupies residues 1–49; the sequence is MAAAALKRMRGPAQAKLLPGSAIQALVGLARPLVLALLLVSAALSSVVS. Residues 50–196 are Extracellular-facing; the sequence is RTDSPSPTVL…MPSSNIEEED (147 aa). Residues 72-96 show a composition bias toward polar residues; sequence THENQTKPSISQISTTLPPTMSTEK. 2 disordered regions span residues 72-123 and 135-168; these read THEN…EDPS and SPST…SDDT. N-linked (GlcNAc...) asparagine glycosylation is present at N75. The segment covering 114–123 has biased composition (acidic residues); it reads EEADNNEDPS. Residues 197-217 traverse the membrane as a helical segment; the sequence is SHFFFHLIIFAFCIAVVYITY. The Cytoplasmic portion of the chain corresponds to 218-265; that stretch reads HNKRKIFLLVQSRKWRDGLCSKTVEYHRLDQNVNEAMPSLKITNDYTF. S229 and S256 each carry phosphoserine.

It is found in the membrane. The protein is Keratinocyte-associated transmembrane protein 2 (KCT2) of Pongo abelii (Sumatran orangutan).